The primary structure comprises 86 residues: Small ribosomal subunit protein uS17 (86 aa).

Belongs to the universal ribosomal protein uS17 family. As to quaternary structure, part of the 30S ribosomal subunit.

In terms of biological role, one of the primary rRNA binding proteins, it binds specifically to the 5'-end of 16S ribosomal RNA. The polypeptide is Small ribosomal subunit protein uS17 (Streptococcus pyogenes serotype M6 (strain ATCC BAA-946 / MGAS10394)).